Here is a 612-residue protein sequence, read N- to C-terminus: Cyclin-dependent kinase G1 (612 aa).

Residues 26–54 (SRDVYVRQSGRDDERRQIKRPSDHDLRRN) are compositionally biased toward basic and acidic residues. Disordered regions lie at residues 26-60 (SRDVYVRQSGRDDERRQIKRPSDHDLRRNDGRHRS) and 239-278 (CYSSGSGSGHLSVEKLSADGNSGREYYSSDHDELEHEDQD). Residues 297–593 (FQKLNKINEG…VEDALNHGWF (297 aa)) form the Protein kinase domain. ATP-binding positions include 303-311 (INEGTYGIV) and lysine 326. Tyrosine 308 carries the phosphotyrosine modification. Aspartate 426 serves as the catalytic Proton acceptor. Position 453 is a phosphoserine (serine 453). Threonine 459 bears the Phosphothreonine mark.

This sequence belongs to the protein kinase superfamily. Ser/Thr protein kinase family. Forms a complex with CYCL1-1. Associated with the spliceosome. Interacts with RS2Z33. In terms of tissue distribution, expressed in leaves and inflorescences. Lower levels of expression in roots and stems.

Its subcellular location is the nucleus speckle. The enzyme catalyses L-seryl-[protein] + ATP = O-phospho-L-seryl-[protein] + ADP + H(+). The catalysed reaction is L-threonyl-[protein] + ATP = O-phospho-L-threonyl-[protein] + ADP + H(+). In terms of biological role, cyclin-dependent kinase involved in pre-mRNA splicing. Required for the correct splicing of the sixth intron of CALS5 pre-mRNA. May stabilize the binding of U1 snRNP to this rare type of intron with a GC 5'SS. Involved in chromosome pairing and is required for the completion of synapsis in male meiocytes at high ambient temperatures. In Arabidopsis thaliana (Mouse-ear cress), this protein is Cyclin-dependent kinase G1 (CDKG1).